The chain runs to 496 residues: Splicing factor U2AF 65 kDa subunit (496 aa).

Basic and acidic residues predominate over residues 1–26 (MSDHQDGMKLEDIERQFLDVAQREGG). Residues 1–142 (MSDHQDGMKL…PKKYRFWDVP (142 aa)) form a disordered region. A compositionally biased stretch (basic residues) spans 59–77 (KKRKRSRSRDRDTRRRSRS). Composition is skewed to basic and acidic residues over residues 78 to 96 (RDRG…DRSR) and 105 to 138 (GGRD…KYRF). 3 RRM domains span residues 184-266 (RRLY…RPRD), 291-368 (NKIF…LACA), and 404-488 (NMVT…YYDV).

In terms of assembly, forms a heterodimer with the U2AF small subunit.

The protein resides in the nucleus. Necessary for the splicing of pre-mRNA. Binds to the polypyrimidine tract of introns early during spliceosome assembly. The sequence is that of Splicing factor U2AF 65 kDa subunit (uaf-1) from Caenorhabditis elegans.